We begin with the raw amino-acid sequence, 124 residues long: Large ribosomal subunit protein bL20c (124 aa).

This sequence belongs to the bacterial ribosomal protein bL20 family.

The protein localises to the plastid. It localises to the chloroplast. Binds directly to 23S ribosomal RNA and is necessary for the in vitro assembly process of the 50S ribosomal subunit. It is not involved in the protein synthesizing functions of that subunit. This Euglena gracilis protein is Large ribosomal subunit protein bL20c (rpl20).